Consider the following 564-residue polypeptide: Septation ring formation regulator EzrA (564 aa).

Residues 1-4 (MVLY) are Extracellular-facing. Residues 5 to 23 (IILAIIVIILIAVGVLFYL) form a helical membrane-spanning segment. At 24 to 564 (RSNKRQIIEK…KHIEEEVIKQ (541 aa)) the chain is on the cytoplasmic side. Coiled coils occupy residues 99 to 138 (SFNASQSEIDDANELMDSYEQSYQQQLEDVNEIIALYKDN), 190 to 223 (DGNYVQAHNHIAALNEQMKQLRSYMEEIPELIRE), 271 to 300 (LISRLELEEANDKLANINDKLDDMYDLIEH), 350 to 435 (VRQF…RRLL), and 471 to 550 (VKQL…ESVE).

Belongs to the EzrA family.

Its subcellular location is the cell membrane. Functionally, negative regulator of FtsZ ring formation; modulates the frequency and position of FtsZ ring formation. Inhibits FtsZ ring formation at polar sites. Interacts either with FtsZ or with one of its binding partners to promote depolymerization. This Staphylococcus aureus (strain JH1) protein is Septation ring formation regulator EzrA.